The following is a 1453-amino-acid chain: DNA-directed RNA polymerase IV subunit 1 (1453 aa).

Residues Cys-56, Cys-59, Cys-67, His-70, Cys-97, Cys-100, and Cys-121 each contribute to the Zn(2+) site. Mg(2+) is bound by residues Asp-447, Asp-449, and Asp-451. Positions 806 to 818 (PLESFVHSVTSRD) are bridging helix.

It belongs to the RNA polymerase beta' chain family. Component of the RNA polymerase IV complex. Interacts with NRPD2, NRPD3, NRPD3B, NRPD4, NRPD5, NRPD5B, NRPD6A, NRPD7, NRPD7B, NRPD9A, NRPD9B, NRPD10, NRPD11, NRPD12, RDR2, RDM4, CLSY1, CLSY2, CLSY3, CLSY4 and SHH1. As to expression, mostly expressed in flowers, and, to a lower extent, in leaves.

The protein resides in the nucleus. The catalysed reaction is RNA(n) + a ribonucleoside 5'-triphosphate = RNA(n+1) + diphosphate. DNA-dependent RNA polymerase catalyzes the transcription of DNA into RNA using the four ribonucleoside triphosphates as substrates. Largest and catalytic component of RNA polymerase IV which mediates 24-nt short-interfering RNAs (siRNA) accumulation. Implicated in siRNA-directed heterochromatin formation through the action of DCL3 and AGO4, and subsequent DNA methylation-dependent silencing of targeted sequences. Essential component of a self-reinforcing loop coupling de novo DNA methylation to siRNA production. Required for intercellular but not intracellular RNA interference (RNAi) leading to systemic post-transcriptional gene silencing. Involved in the maintenance of post-transcriptional RNA silencing. This chain is DNA-directed RNA polymerase IV subunit 1 (NRPD1), found in Arabidopsis thaliana (Mouse-ear cress).